The primary structure comprises 109 residues: Probable glutaredoxin slr1562 (109 aa).

The Glutaredoxin domain maps to 11–109; that stretch reads LSGRQADGIK…PLLATPPNPA (99 aa). Cysteines 31 and 34 form a disulfide.

This sequence belongs to the glutaredoxin family.

In terms of biological role, has a glutathione-disulfide oxidoreductase activity in the presence of NADPH and glutathione reductase. Reduces low molecular weight disulfides and proteins. The polypeptide is Probable glutaredoxin slr1562 (Synechocystis sp. (strain ATCC 27184 / PCC 6803 / Kazusa)).